We begin with the raw amino-acid sequence, 202 residues long: CASP-like protein 2B1 (202 aa).

At 1–29 (MSYLGVGVSPGNVPVYHGTNLKVVDRRVR) the chain is on the cytoplasmic side. The helical transmembrane segment at 30–50 (LAELVLRCVICGLGILAAVLV) threads the bilayer. Residues 51–72 (GTDTQVKVIFTIQKKAKFTDMK) lie on the Extracellular side of the membrane. Residues 73-93 (ALVFLVIANGIAAAYSLIQGL) traverse the membrane as a helical segment. Over 94–109 (RCVVSMVRGSVLFSKP) the chain is Cytoplasmic. A helical membrane pass occupies residues 110–130 (LAWAIFSGDQVIAYLTLAAVA). Topologically, residues 131 to 164 (AAAQSSVFGEFGQPELQWMKICNMYGKFCNQVGE) are extracellular. A helical membrane pass occupies residues 165-185 (GIVSAVGVSLSMVILSGISAF). Over 186–202 (SLFRLYGGNKGTSGGRW) the chain is Cytoplasmic.

It belongs to the Casparian strip membrane proteins (CASP) family. In terms of assembly, homodimer and heterodimers.

It is found in the cell membrane. In Vitis vinifera (Grape), this protein is CASP-like protein 2B1.